A 306-amino-acid polypeptide reads, in one-letter code: HORMA domain-containing protein 2 (306 aa).

Residues 29-232 enclose the HORMA domain; the sequence is HESLIMVKKL…TGFHSMKVKV (204 aa).

In terms of assembly, interacts with HORMAD1. In terms of processing, phosphorylated in a SPO11-dependent manner.

The protein resides in the nucleus. It is found in the chromosome. Functionally, essential for synapsis surveillance during meiotic prophase via the recruitment of ATR activity. Plays a key role in the male mid-pachytene checkpoint and the female meiotic prophase checkpoint: required for efficient build-up of ATR activity on unsynapsed chromosome regions, a process believed to form the basis of meiotic silencing of unsynapsed chromatin (MSUC) and meiotic prophase quality control in both sexes. Required for the DNA double-strand break-independent, BRCA1-dependent activation of ATR on the sex chromosomes that is essential for normal sex body formation. The chain is HORMA domain-containing protein 2 (HORMAD2) from Bos taurus (Bovine).